A 301-amino-acid polypeptide reads, in one-letter code: MTVQRILIVAGTHGNEINPIWAVKQFNRNENSLKHGIEYEYIIGNPIAYEKGCRYIDADLNRSFKKSKNYDQNENSFYEISRANFLVDQFGINGSKPCQIAIDLHTTTANMGTSIVMYGRRFKDFCLAALLQNKFGLPIYLHEKDKSQTGFLVEAWPCGLVIEIGAVAQNFYDPKIINRFLIIISSLRDEIDKLKKNLIELPKDLVVHVHQGSVDYPRDEKGDIDGLIHPKRINRDWKMIKKGDPLFLNSQGIIYKYDGDQFIWPVFIGEVAYKEKQIAMSYTNKEVICSKNEWVQEFHRL.

H13 and E16 together coordinate Zn(2+). Substrate is bound by residues R54 and 61-62 (NR). Zn(2+) is bound at residue H105. Residues E163 and Y273 each contribute to the substrate site.

This sequence belongs to the AspA/AstE family. Aspartoacylase subfamily. Requires Zn(2+) as cofactor.

It carries out the reaction an N-acyl-L-aspartate + H2O = a carboxylate + L-aspartate. This chain is Probable aspartoacylase, found in Prochlorococcus marinus (strain MIT 9312).